A 359-amino-acid chain; its full sequence is Type-1 angiotensin II receptor (359 aa).

At 1–25 the chain is on the extracellular side; that stretch reads MVPNYSTEETVKRIHVDCPVSGRHS. N4 is a glycosylation site (N-linked (GlcNAc...) asparagine). Position 17 (D17) interacts with angiotensin II. 2 disulfides stabilise this stretch: C18–C274 and C101–C180. A helical membrane pass occupies residues 26–55; the sequence is YIYIMVPTVYSIIFIIGIFGNSLVVIVIYC. At 56-61 the chain is on the cytoplasmic side; that stretch reads YMKLKT. The chain crosses the membrane as a helical span at residues 62 to 89; the sequence is VASIFLLNLALADLCFLITLPLWAAYTA. Topologically, residues 90–98 are extracellular; sequence MEYQWPFGN. The chain crosses the membrane as a helical span at residues 99 to 125; that stretch reads CLCKLASAGISFNLYASVFLLTCLSID. The Cytoplasmic segment spans residues 126–141; that stretch reads RYLAIVHPVKSRIRRT. Residues 142 to 165 traverse the membrane as a helical segment; it reads MFVARVTCIVIWLLAGVASLPVII. The Extracellular portion of the chain corresponds to 166-190; sequence HRNIFFAENLNMTVCGFRYDNNNTT. R167 provides a ligand contact to angiotensin II. N176 carries N-linked (GlcNAc...) asparagine glycosylation. F182 and Y184 together coordinate angiotensin II. 2 N-linked (GlcNAc...) asparagine glycosylation sites follow: N187 and N188. A helical membrane pass occupies residues 191–216; sequence LRVGLGLSKNLLGFLIPFLIILTSYT. Residue K199 participates in angiotensin II binding. At 217–239 the chain is on the cytoplasmic side; the sequence is LIWKTLKKAYQIQRNKTRNDDIF. Residues 240–268 form a helical membrane-spanning segment; the sequence is KMIVAIVFFFFFSWIPHQVFTFLDVLIQL. Residues 269-278 lie on the Extracellular side of the membrane; the sequence is HVITDCKITD. Residues 279-304 traverse the membrane as a helical segment; it reads IVDTAMPFTICIAYFNNCLNPFFYVF. Residues 305–359 are Cytoplasmic-facing; sequence FGKNFKKYFLQLIKYIPPNVSTHPSLTTKMSSLSYRPPENIRLPTKKTAGSFDTE.

It belongs to the G-protein coupled receptor 1 family. Post-translationally, C-terminal Ser or Thr residues may be phosphorylated. Adrenal medulla.

Its subcellular location is the cell membrane. Receptor for angiotensin II, a vasoconstricting peptide, which acts as a key regulator of blood pressure and sodium retention by the kidney. The activated receptor in turn couples to G-alpha proteins G(q) (GNAQ, GNA11, GNA14 or GNA15) and thus activates phospholipase C and increases the cytosolic Ca(2+) concentrations, which in turn triggers cellular responses such as stimulation of protein kinase C. In Meleagris gallopavo (Wild turkey), this protein is Type-1 angiotensin II receptor (AGTR1).